The sequence spans 1161 residues: Nardilysin (1161 aa).

A signal peptide spans 1–18 (MLRRVAVAAVCVTGRKLR). 2 disordered regions span residues 49–103 (MPGR…IIKS) and 130–218 (VEGK…KKTT). Phosphoserine occurs at positions 85, 91, and 93. Residues 138–209 (TDEEEEEEEE…EENELEELEE (72 aa)) are compositionally biased toward acidic residues. H244 contacts Zn(2+). The Proton acceptor role is filled by E247. Zn(2+) is bound by residues H248 and E325.

This sequence belongs to the peptidase M16 family. Interacts with BACE1 and NRG1. Zn(2+) is required as a cofactor. Highly expressed in brain of early postnatal mice but expressed at a lower level in the brains of adult mice. Expression is high in cortical neurons, and lower in neurons in the striatum. Very low expression detected in the corpus callosum. Also expressed in the gray matter in spinal cord and dorsal root ganglia.

The protein resides in the mitochondrion. Its subcellular location is the cell projection. It is found in the dendrite. It catalyses the reaction Hydrolysis of polypeptides, preferably at -Xaa-|-Arg-Lys-, and less commonly at -Arg-|-Arg-Xaa-, in which Xaa is not Arg or Lys.. Its function is as follows. Cleaves peptide substrates on the N-terminus of arginine residues in dibasic pairs. Is a critical activator of BACE1- and ADAM17-mediated pro-neuregulin ectodomain shedding, involved in the positive regulation of axonal maturation and myelination. Required for proper functioning of 2-oxoglutarate dehydrogenase (OGDH). The sequence is that of Nardilysin from Mus musculus (Mouse).